Consider the following 438-residue polypeptide: MEVAPSDVDLRTSRRFYERAQHSIPGGVNSPARAFDSVGGTPLFIERAEGAYLEDADANEYLDYVGSWGPMIFGHAHPDVVEAVKDQAEASTSFGAPTEIEIEVADLVCDLVPSVEKVRMVNSGTEATMSAARLARGYTGRDKIIKFEGNYHGHGDFFLISAGSGAMTLGKPDSPGVTDGNAKDTLLAQYNDLSHVQRLVEANQGEVACIIVEPIAGNMGCIPPEPGFLEGLRELCDAHDIVLVFDEVMTGFRVAPGGAQERYGVIPDLTCLGKIIGGGLPVGAYGGKQEIMDYVAPTGPVYQAGTLSGNPLAMRAGHAILSKIAEEKDRIYDQLEDYAEALQKGTEHNLDALGLDYTTHQVGAMGSLFFTDAEVVDQDTAQTADTEAYAAYFHAMLEEGIYLPPSQFEAVFYGTCHGEDELETTLETQRRALKRVHS.

Lys-274 carries the post-translational modification N6-(pyridoxal phosphate)lysine.

Belongs to the class-III pyridoxal-phosphate-dependent aminotransferase family. HemL subfamily. As to quaternary structure, homodimer. Pyridoxal 5'-phosphate is required as a cofactor.

Its subcellular location is the cytoplasm. It catalyses the reaction (S)-4-amino-5-oxopentanoate = 5-aminolevulinate. It functions in the pathway porphyrin-containing compound metabolism; protoporphyrin-IX biosynthesis; 5-aminolevulinate from L-glutamyl-tRNA(Glu): step 2/2. This is Glutamate-1-semialdehyde 2,1-aminomutase from Salinibacter ruber (strain DSM 13855 / M31).